The following is a 244-amino-acid chain: Large ribosomal subunit protein uL30B (244 aa).

Positions 1 to 11 are enriched in polar residues; sequence MSTEKILTPES. Positions 1 to 21 are disordered; it reads MSTEKILTPESQLKKTKAQQK.

Belongs to the universal ribosomal protein uL30 family. In terms of assembly, component of the large ribosomal subunit (LSU). Mature yeast ribosomes consist of a small (40S) and a large (60S) subunit. The 40S small subunit contains 1 molecule of ribosomal RNA (18S rRNA) and 33 different proteins (encoded by 57 genes). The large 60S subunit contains 3 rRNA molecules (25S, 5.8S and 5S rRNA) and 46 different proteins (encoded by 81 genes).

It is found in the cytoplasm. Functionally, component of the ribosome, a large ribonucleoprotein complex responsible for the synthesis of proteins in the cell. The small ribosomal subunit (SSU) binds messenger RNAs (mRNAs) and translates the encoded message by selecting cognate aminoacyl-transfer RNA (tRNA) molecules. The large subunit (LSU) contains the ribosomal catalytic site termed the peptidyl transferase center (PTC), which catalyzes the formation of peptide bonds, thereby polymerizing the amino acids delivered by tRNAs into a polypeptide chain. The nascent polypeptides leave the ribosome through a tunnel in the LSU and interact with protein factors that function in enzymatic processing, targeting, and the membrane insertion of nascent chains at the exit of the ribosomal tunnel. The sequence is that of Large ribosomal subunit protein uL30B from Saccharomyces cerevisiae (strain ATCC 204508 / S288c) (Baker's yeast).